A 100-amino-acid chain; its full sequence is Urease subunit gamma (100 aa).

Belongs to the urease gamma subunit family. As to quaternary structure, heterotrimer of UreA (gamma), UreB (beta) and UreC (alpha) subunits. Three heterotrimers associate to form the active enzyme.

Its subcellular location is the cytoplasm. It catalyses the reaction urea + 2 H2O + H(+) = hydrogencarbonate + 2 NH4(+). Its pathway is nitrogen metabolism; urea degradation; CO(2) and NH(3) from urea (urease route): step 1/1. The protein is Urease subunit gamma of Haemophilus influenzae (strain PittGG).